The primary structure comprises 322 residues: Pantothenate kinase (322 aa).

101 to 108 (GSVAVGKS) is a binding site for ATP.

The protein belongs to the prokaryotic pantothenate kinase family.

It is found in the cytoplasm. It carries out the reaction (R)-pantothenate + ATP = (R)-4'-phosphopantothenate + ADP + H(+). The protein operates within cofactor biosynthesis; coenzyme A biosynthesis; CoA from (R)-pantothenate: step 1/5. This is Pantothenate kinase from Psychromonas ingrahamii (strain DSM 17664 / CCUG 51855 / 37).